The following is a 429-amino-acid chain: Adenylosuccinate synthetase (429 aa).

Residues 13-19 (GDEGKGK) and 41-43 (GHT) contribute to the GTP site. Asp-14 (proton acceptor) is an active-site residue. Positions 14 and 41 each coordinate Mg(2+). IMP contacts are provided by residues 14-17 (DEGK), 39-42 (NAGH), Thr-130, Arg-144, Gln-224, Thr-239, and Arg-303. His-42 functions as the Proton donor in the catalytic mechanism. Residue 299-305 (ATTGRAR) coordinates substrate. Residues Arg-305, 331-333 (KLD), and 412-414 (STG) contribute to the GTP site.

Belongs to the adenylosuccinate synthetase family. Homodimer. Mg(2+) serves as cofactor.

The protein localises to the cytoplasm. It carries out the reaction IMP + L-aspartate + GTP = N(6)-(1,2-dicarboxyethyl)-AMP + GDP + phosphate + 2 H(+). It participates in purine metabolism; AMP biosynthesis via de novo pathway; AMP from IMP: step 1/2. In terms of biological role, plays an important role in the de novo pathway of purine nucleotide biosynthesis. Catalyzes the first committed step in the biosynthesis of AMP from IMP. In Psychrobacter sp. (strain PRwf-1), this protein is Adenylosuccinate synthetase.